Consider the following 346-residue polypeptide: NADH-ubiquinone oxidoreductase chain 2 (346 aa).

Transmembrane regions (helical) follow at residues 3–23, 25–45, 59–79, 96–116, 122–142, 149–169, 178–198, 200–220, 242–262, 274–294, and 322–342; these read PLIF…VMMS, HWLM…PILM, YFLT…INLM, IIMT…FWVP, ISLT…MSIL, INLN…GWGG, IMAY…VYNP, LTML…MLFI, TLIL…GFMP, SSII…YFYM, and ITLL…TPML.

Belongs to the complex I subunit 2 family. As to quaternary structure, core subunit of respiratory chain NADH dehydrogenase (Complex I) which is composed of 45 different subunits. Interacts with TMEM242.

Its subcellular location is the mitochondrion inner membrane. The catalysed reaction is a ubiquinone + NADH + 5 H(+)(in) = a ubiquinol + NAD(+) + 4 H(+)(out). Its function is as follows. Core subunit of the mitochondrial membrane respiratory chain NADH dehydrogenase (Complex I) which catalyzes electron transfer from NADH through the respiratory chain, using ubiquinone as an electron acceptor. Essential for the catalytic activity and assembly of complex I. This chain is NADH-ubiquinone oxidoreductase chain 2, found in Equus caballus (Horse).